The chain runs to 426 residues: Lipid droplet localized protein (426 aa).

The helical transmembrane segment at 278–298 (FYGYLIGLWIMFLSIFVKYPF) threads the bilayer.

Belongs to the saccharopine dehydrogenase family.

Its subcellular location is the membrane. It localises to the lipid droplet. In Caenorhabditis elegans, this protein is Lipid droplet localized protein.